Reading from the N-terminus, the 300-residue chain is Lipoyl synthase 2 (300 aa).

Positions 46, 51, 57, 72, 76, 79, and 294 each coordinate [4Fe-4S] cluster. Positions 58-283 (YAQKTATFLL…GKLAREMGFS (226 aa)) constitute a Radical SAM core domain.

It belongs to the radical SAM superfamily. Lipoyl synthase family. Requires [4Fe-4S] cluster as cofactor.

It localises to the cytoplasm. It catalyses the reaction [[Fe-S] cluster scaffold protein carrying a second [4Fe-4S](2+) cluster] + N(6)-octanoyl-L-lysyl-[protein] + 2 oxidized [2Fe-2S]-[ferredoxin] + 2 S-adenosyl-L-methionine + 4 H(+) = [[Fe-S] cluster scaffold protein] + N(6)-[(R)-dihydrolipoyl]-L-lysyl-[protein] + 4 Fe(3+) + 2 hydrogen sulfide + 2 5'-deoxyadenosine + 2 L-methionine + 2 reduced [2Fe-2S]-[ferredoxin]. Its pathway is protein modification; protein lipoylation via endogenous pathway; protein N(6)-(lipoyl)lysine from octanoyl-[acyl-carrier-protein]: step 2/2. Catalyzes the radical-mediated insertion of two sulfur atoms into the C-6 and C-8 positions of the octanoyl moiety bound to the lipoyl domains of lipoate-dependent enzymes, thereby converting the octanoylated domains into lipoylated derivatives. The sequence is that of Lipoyl synthase 2 from Nostoc sp. (strain PCC 7120 / SAG 25.82 / UTEX 2576).